The chain runs to 75 residues: Small ribosomal subunit protein bS18 (75 aa).

Belongs to the bacterial ribosomal protein bS18 family. As to quaternary structure, part of the 30S ribosomal subunit. Forms a tight heterodimer with protein bS6.

In terms of biological role, binds as a heterodimer with protein bS6 to the central domain of the 16S rRNA, where it helps stabilize the platform of the 30S subunit. This chain is Small ribosomal subunit protein bS18, found in Idiomarina loihiensis (strain ATCC BAA-735 / DSM 15497 / L2-TR).